Reading from the N-terminus, the 247-residue chain is Orotidine 5'-phosphate decarboxylase (247 aa).

Substrate-binding positions include Asp-22, Lys-44, 71 to 80 (DLKFHDIPNT), Thr-131, Arg-192, Gln-201, Gly-221, and Arg-222. Lys-73 (proton donor) is an active-site residue.

It belongs to the OMP decarboxylase family. Type 1 subfamily. In terms of assembly, homodimer.

The catalysed reaction is orotidine 5'-phosphate + H(+) = UMP + CO2. Its pathway is pyrimidine metabolism; UMP biosynthesis via de novo pathway; UMP from orotate: step 2/2. In terms of biological role, catalyzes the decarboxylation of orotidine 5'-monophosphate (OMP) to uridine 5'-monophosphate (UMP). This is Orotidine 5'-phosphate decarboxylase from Pectobacterium carotovorum subsp. carotovorum (strain PC1).